Consider the following 117-residue polypeptide: MVRVKRGNVARKRRKKILQLAKGYRGAHSRLFRVANQQVMKALRYSYVGRKQKKRVFRKLWISRINASSREKGVTYSTLINSFKKSKINLNRKMLAQIAVLDCSTFYKLIDDAKSPN.

It belongs to the bacterial ribosomal protein bL20 family.

The protein resides in the plastid. It localises to the chloroplast. Its function is as follows. Binds directly to 23S ribosomal RNA and is necessary for the in vitro assembly process of the 50S ribosomal subunit. It is not involved in the protein synthesizing functions of that subunit. The sequence is that of Large ribosomal subunit protein bL20c from Thalassiosira pseudonana (Marine diatom).